The chain runs to 296 residues: Glycine--tRNA ligase alpha subunit (296 aa).

It belongs to the class-II aminoacyl-tRNA synthetase family. In terms of assembly, tetramer of two alpha and two beta subunits.

Its subcellular location is the cytoplasm. The catalysed reaction is tRNA(Gly) + glycine + ATP = glycyl-tRNA(Gly) + AMP + diphosphate. The sequence is that of Glycine--tRNA ligase alpha subunit from Synechococcus sp. (strain WH7803).